A 440-amino-acid polypeptide reads, in one-letter code: Thymidine phosphorylase (440 aa).

The protein belongs to the thymidine/pyrimidine-nucleoside phosphorylase family. Homodimer.

It catalyses the reaction thymidine + phosphate = 2-deoxy-alpha-D-ribose 1-phosphate + thymine. Its pathway is pyrimidine metabolism; dTMP biosynthesis via salvage pathway; dTMP from thymine: step 1/2. Its function is as follows. The enzymes which catalyze the reversible phosphorolysis of pyrimidine nucleosides are involved in the degradation of these compounds and in their utilization as carbon and energy sources, or in the rescue of pyrimidine bases for nucleotide synthesis. In Klebsiella pneumoniae subsp. pneumoniae (strain ATCC 700721 / MGH 78578), this protein is Thymidine phosphorylase.